The sequence spans 123 residues: PTS-dependent dihydroxyacetone kinase, phosphotransferase subunit DhaM (123 aa).

One can recognise a PTS EIIA type-4 domain in the interval 2–123; that stretch reads TYGIVIVSHS…EQLEKMLIEK (122 aa). H10 acts as the Tele-phosphohistidine intermediate; for EIIA activity in catalysis.

As to quaternary structure, homodimer. The dihydroxyacetone kinase complex is composed of a homodimer of DhaM, a homodimer of DhaK and the subunit DhaL.

It catalyses the reaction dihydroxyacetone + phosphoenolpyruvate = dihydroxyacetone phosphate + pyruvate. It participates in polyol metabolism; glycerol degradation. Its function is as follows. Component of the dihydroxyacetone kinase complex, which is responsible for the phosphoenolpyruvate (PEP)-dependent phosphorylation of dihydroxyacetone. DhaM serves as the phosphoryl donor. Is phosphorylated by phosphoenolpyruvate in an EI- and HPr-dependent reaction, and a phosphorelay system on histidine residues finally leads to phosphoryl transfer to DhaL and dihydroxyacetone. In Lactococcus lactis subsp. lactis (strain IL1403) (Streptococcus lactis), this protein is PTS-dependent dihydroxyacetone kinase, phosphotransferase subunit DhaM.